The sequence spans 315 residues: Lipase 3 (315 aa).

Residues 1–18 (MLLKRLGLAALFSLSMVG) form the signal peptide. Cys-19 carries the N-palmitoyl cysteine lipid modification. Cys-19 carries S-diacylglycerol cysteine lipidation. Residues 69 to 296 (PLLLIHGFGG…MNDVGHVPMV (228 aa)) form the AB hydrolase-1 domain. His-74 is a catalytic residue. The Charge relay system role is filled by Ser-142.

It belongs to the lipase/esterase LIP3/BchO family.

The protein localises to the cell membrane. The catalysed reaction is a triacylglycerol + H2O = a diacylglycerol + a fatty acid + H(+). This Moraxella sp. (strain TA144) protein is Lipase 3 (lip3).